The sequence spans 426 residues: MEKELRSTILFNAYKKEVFTTNTGYKSLQKRLRSNWKIQSLKDEITSEKLIGVKLWITAGPREKFTAAEFEVLKKYLDSGGDILVMLGEGGESRFDTNINFLLEEYGIMVNNDAVVRNVYYKYFHPKEALVSDGVLNREISRAAGKAVPGVIDEENSGNNAQALTFVYPFGATLSVMKPAVAVLSTGSVCFPLNRPILAFYHSKNQGFGKLAVLGSCHMFSDQYLDKEENSKIMDVVFQWLTTGDIHLNQIDAEDPEISDYTMVPDTATLSEQLRVCLQEGDENPRDFTTLFDLSIYQLDTTCLPKVIKAHEELNVKHEPLQLVQPQFEMPLPALQPAVFPPSFRELPPPPLELFDLDETFSSEKARLAQITNKCTDEDLEFYVRKCGDILGVTSKLPKDQQDAKHILEHIFFQVVEFKKLNQEAH.

As to quaternary structure, component of the IFT complex B, at least composed of IFT20, IFT22, IFT25, IFT27, IFT46, IFT52, TRAF3IP1/IFT54, IFT57, IFT74, IFT80, IFT81, and IFT88. Interacts with IFT88. Interacts with TTC25. Interacts with TTC21A. Interacts with IFT70A1, IFT70A2, IFT70B and KIF17. Interacts with USH1G.

Its subcellular location is the cell projection. It localises to the cilium. Its function is as follows. Involved in ciliogenesis as part of a complex involved in intraflagellar transport (IFT), the bi-directional movement of particles required for the assembly, maintenance and functioning of primary cilia. Required for the anterograde transport of IFT88. The polypeptide is Intraflagellar transport protein 52 homolog (Ift52) (Mus musculus (Mouse)).